Here is a 501-residue protein sequence, read N- to C-terminus: MEEKHQEETGELTLVLALATLIAAFGSSFQYGYNVAAVNSPSEFMQQFYNDTYYDRNEENIESFTLTLLWSLTVSMFPFGGFIGSLMVGTLVNKLGRKGALLFNNIFSILPAILMGCSQIAQSFELIIISRLLVGICAGISSNVVPMYLGELAPKNLRGALGVVPQLFITVGILVAQLFGLRSLLANEDGWPVLLGLTGVPAGLQLLLLPFFPESPRYLLIQKKDEAAAERALQTLRGWKDVHLEMEEIRKEDEAEKAAGFISVWKLFTMQSLRWQLISMIVLMAGQQLSGVNAIYYYADQIYLSAGVKSDDVQYVTAGTGAVNVFMTILTIFVVELWGRRFLLLVGFSTCLIACLVLTAALALQNTISWMPYISIVCVIVYVIGHALGPSPIPALLITEIFLQSSRPAAYMIGGSVHWLSNFTVGLIFPFIQMGLGPYSFIIFATICFLTTIYIFMVVPETKGRTFIEINQIFTMKNKVSDVYPKKEEELGALPHAILEQ.

Methionine 1 is modified (N-acetylmethionine). The Cytoplasmic portion of the chain corresponds to 1 to 17 (MEEKHQEETGELTLVLA). Residues 18–38 (LATLIAAFGSSFQYGYNVAAV) form a helical membrane-spanning segment. Tyrosine 31 lines the D-fructose pocket. The Extracellular segment spans residues 39–67 (NSPSEFMQQFYNDTYYDRNEENIESFTLT). N-linked (GlcNAc...) asparagine glycosylation is present at asparagine 50. The chain crosses the membrane as a helical span at residues 68-90 (LLWSLTVSMFPFGGFIGSLMVGT). The Cytoplasmic segment spans residues 91–97 (LVNKLGR). A helical transmembrane segment spans residues 98–118 (KGALLFNNIFSILPAILMGCS). Topologically, residues 119 to 125 (QIAQSFE) are extracellular. A helical membrane pass occupies residues 126 to 148 (LIIISRLLVGICAGISSNVVPMY). Topologically, residues 149-160 (LGELAPKNLRGA) are cytoplasmic. A helical membrane pass occupies residues 161–181 (LGVVPQLFITVGILVAQLFGL). Residue glutamine 166 coordinates D-fructose. Residues 182-191 (RSLLANEDGW) lie on the Extracellular side of the membrane. Residues 192 to 212 (PVLLGLTGVPAGLQLLLLPFF) form a helical membrane-spanning segment. Over 213–276 (PESPRYLLIQ…LFTMQSLRWQ (64 aa)) the chain is Cytoplasmic. Residues 277-297 (LISMIVLMAGQQLSGVNAIYY) traverse the membrane as a helical segment. Residues glutamine 287 and 295–297 (IYY) contribute to the D-fructose site. Residues 298–312 (YADQIYLSAGVKSDD) are Extracellular-facing. The chain crosses the membrane as a helical span at residues 313 to 333 (VQYVTAGTGAVNVFMTILTIF). Over 334–341 (VVELWGRR) the chain is Cytoplasmic. Residues 342 to 362 (FLLLVGFSTCLIACLVLTAAL) traverse the membrane as a helical segment. Topologically, residues 363 to 370 (ALQNTISW) are extracellular. A helical membrane pass occupies residues 371–393 (MPYISIVCVIVYVIGHALGPSPI). Residue histidine 386 coordinates D-fructose. The Cytoplasmic portion of the chain corresponds to 394–411 (PALLITEIFLQSSRPAAY). Residues 412 to 432 (MIGGSVHWLSNFTVGLIFPFI) form a helical membrane-spanning segment. Residue 418–419 (HW) coordinates D-fructose. The Extracellular portion of the chain corresponds to 433-438 (QMGLGP). Residues 439 to 459 (YSFIIFATICFLTTIYIFMVV) traverse the membrane as a helical segment. The Cytoplasmic segment spans residues 460–501 (PETKGRTFIEINQIFTMKNKVSDVYPKKEEELGALPHAILEQ).

It belongs to the major facilitator superfamily. Sugar transporter (TC 2.A.1.1) family. Glucose transporter subfamily. Detected at the apical membrane of villi in the jejunum. Detected in jejunum mucosa. Detected in epididymis and whole testis (at protein level). Detected in small intestine, kidney and testis. Detected in cochlea, but not in inner or outer cochlear hair cells.

The protein localises to the apical cell membrane. It is found in the cell membrane. Its subcellular location is the sarcolemma. The catalysed reaction is D-fructose(out) = D-fructose(in). Its activity is regulated as follows. Fructose uptake is inhibited by cytochalasin B. Functionally, functions as a fructose transporter that has only low activity with other monosaccharides. Can mediate the uptake of deoxyglucose, but with low efficiency. Essential for fructose uptake in the small intestine. Plays a role in the regulation of salt uptake and blood pressure in response to dietary fructose. Required for the development of high blood pressure in response to high dietary fructose intake. The protein is Solute carrier family 2, facilitated glucose transporter member 5 of Mus musculus (Mouse).